Consider the following 441-residue polypeptide: Probable pyridine nucleotide-disulfide oxidoreductase RclA (441 aa).

33–43 (EQSNAMYGGTC) is a binding site for FAD. Cys43 and Cys48 are oxidised to a cystine. His426 acts as the Proton acceptor in catalysis.

This sequence belongs to the class-I pyridine nucleotide-disulfide oxidoreductase family. Requires FAD as cofactor.

Its function is as follows. Probably involved in reactive chlorine species (RCS) stress resistance. This chain is Probable pyridine nucleotide-disulfide oxidoreductase RclA (rclA), found in Escherichia coli (strain K12).